A 322-amino-acid chain; its full sequence is Undecaprenyl-phosphate 4-deoxy-4-formamido-L-arabinose transferase (322 aa).

At 1-235 (MFEIHPVKKV…TCLTTTPLRM (235 aa)) the chain is on the cytoplasmic side. The helical transmembrane segment at 236–256 (LSLLGSIIAIGGFSIAVLLVI) threads the bilayer. At 257–269 (LRLTFGPQWAAEG) the chain is on the periplasmic side. A helical membrane pass occupies residues 270 to 290 (VFMLFAVLFTFIGAQFIGMGL). Residues 291-322 (LGEYIGRIYTDVRARPRYFVQQVIRPSSKENE) lie on the Cytoplasmic side of the membrane.

This sequence belongs to the glycosyltransferase 2 family.

Its subcellular location is the cell inner membrane. It catalyses the reaction UDP-4-deoxy-4-formamido-beta-L-arabinose + di-trans,octa-cis-undecaprenyl phosphate = 4-deoxy-4-formamido-alpha-L-arabinopyranosyl di-trans,octa-cis-undecaprenyl phosphate + UDP. Its pathway is glycolipid biosynthesis; 4-amino-4-deoxy-alpha-L-arabinose undecaprenyl phosphate biosynthesis; 4-amino-4-deoxy-alpha-L-arabinose undecaprenyl phosphate from UDP-4-deoxy-4-formamido-beta-L-arabinose and undecaprenyl phosphate: step 1/2. It functions in the pathway bacterial outer membrane biogenesis; lipopolysaccharide biosynthesis. In terms of biological role, catalyzes the transfer of 4-deoxy-4-formamido-L-arabinose from UDP to undecaprenyl phosphate. The modified arabinose is attached to lipid A and is required for resistance to polymyxin and cationic antimicrobial peptides. This chain is Undecaprenyl-phosphate 4-deoxy-4-formamido-L-arabinose transferase, found in Escherichia coli (strain SMS-3-5 / SECEC).